Consider the following 236-residue polypeptide: Rho-related GTP-binding protein RhoV (236 aa).

The interval 1–28 (MPPRELSEAEPPPLPASTPPPRRRSAPP) is disordered. Pro residues predominate over residues 10–20 (EPPPLPASTPP). Ser25 carries the post-translational modification Phosphoserine. GTP is bound by residues 38-45 (GDGAVGKS), 85-89 (DTAGQ), and 143-146 (TQAD). The S-palmitoyl cysteine moiety is linked to residue Cys234.

It belongs to the small GTPase superfamily. Rho family. As to quaternary structure, interacts with PAK2. Mg(2+) serves as cofactor. As to expression, highly expressed in brain and testis and at lower levels in spleen and lung.

The protein localises to the cell membrane. It localises to the endosome membrane. Its function is as follows. Plays a role in the control of the actin cytoskeleton via activation of the JNK pathway. This chain is Rho-related GTP-binding protein RhoV, found in Rattus norvegicus (Rat).